Consider the following 252-residue polypeptide: GPI alpha-1,4-mannosyltransferase I, stabilizing subunit (252 aa).

The first 22 residues, 1–22, serve as a signal peptide directing secretion; it reads MAASALAWLLLWAAGLVGRLAA. N-linked (GlcNAc...) asparagine glycosylation is found at Asn97 and Asn209. The helical transmembrane segment at 225 to 245 threads the bilayer; the sequence is VCSVTLLITVLCSTLILLAVF.

This sequence belongs to the PIGX family. As to quaternary structure, part of the glycosylphosphatidylinositol-mannosyltransferase I complex that is composed of PIGM and PIGX. Interacts with PIGM; PIGX stabilizes PIGM.

The protein resides in the endoplasmic reticulum membrane. The protein operates within glycolipid biosynthesis; glycosylphosphatidylinositol-anchor biosynthesis. In terms of biological role, stabilizing subunit of the glycosylphosphatidylinositol-mannosyltransferase I complex which catalyzes the transfer of the first mannose, via an alpha-1,4 bond from a dolichol-phosphate-mannose (Dol-P-Man) to the glucosaminyl acyl phosphatidylinositol (GlcN-(acyl)PI) intermediate to generate alpha-D-Man-(1-&gt;4)-alpha-D-GlcN-(1-&gt;6)-(1-radyl,2-acyl-sn-glycero-3-phospho)-2-acyl-inositol and participates in the sixth step of the glycosylphosphatidylinositol-anchor biosynthesis. Probably acts by stabilizing the mannosyltransferase PIGM. The protein is GPI alpha-1,4-mannosyltransferase I, stabilizing subunit of Rattus norvegicus (Rat).